We begin with the raw amino-acid sequence, 482 residues long: UDP-glycosyltransferase 1 (482 aa).

N243 carries an N-linked (GlcNAc...) asparagine glycan. The chain crosses the membrane as a helical span at residues 450–470 (IYLVYALVLGSAWWIGKTILG).

The protein belongs to the glycosyltransferase 28 family.

It is found in the membrane. The catalysed reaction is exophillate aglycone + UDP-alpha-D-glucose = exophillate + UDP + H(+). It participates in secondary metabolite biosynthesis. Acts as a depside 2-O-glucosyltransferase that catalyzes the first glycosylation step during phaeomoniecin D biosynthesis by producing the intermediate exophillic acid which is further O-galactosylated into phaeomoniecin D by the C-galactosyltransferase OGT2. The chain is UDP-glycosyltransferase 1 from Phaeomoniella chlamydospora (Phaeoacremonium chlamydosporum).